Here is a 179-residue protein sequence, read N- to C-terminus: O-acetyl-ADP-ribose deacetylase (179 aa).

Residues 1–175 (MTSRLQVIQG…LYARLLTQQG (175 aa)) enclose the Macro domain. Substrate-binding positions include 11–12 (DI), Asn-25, 33–35 (GVD), and 122–126 (STGVY). The active-site Proton acceptor is the Asp-35.

It belongs to the MacroD-type family. YmdB subfamily. Homodimer. Interacts with RNase III.

The catalysed reaction is 3''-O-acetyl-ADP-D-ribose + H2O = ADP-D-ribose + acetate + H(+). The enzyme catalyses 2''-O-acetyl-ADP-D-ribose + H2O = ADP-D-ribose + acetate + H(+). In terms of biological role, deacetylates O-acetyl-ADP ribose to yield ADP-ribose and free acetate. Down-regulates ribonuclease 3 (RNase III) activity. Acts by interacting directly with the region of the ribonuclease that is required for dimerization/activation. The chain is O-acetyl-ADP-ribose deacetylase from Salmonella gallinarum (strain 287/91 / NCTC 13346).